The following is a 437-amino-acid chain: Serine hydroxymethyltransferase 2 (437 aa).

Residues leucine 125 and 129-131 each bind (6S)-5,6,7,8-tetrahydrofolate; that span reads GHL. An N6-(pyridoxal phosphate)lysine modification is found at lysine 234.

This sequence belongs to the SHMT family. In terms of assembly, homodimer. The cofactor is pyridoxal 5'-phosphate.

It localises to the cytoplasm. The enzyme catalyses (6R)-5,10-methylene-5,6,7,8-tetrahydrofolate + glycine + H2O = (6S)-5,6,7,8-tetrahydrofolate + L-serine. It participates in one-carbon metabolism; tetrahydrofolate interconversion. Its pathway is amino-acid biosynthesis; glycine biosynthesis; glycine from L-serine: step 1/1. Functionally, catalyzes the reversible interconversion of serine and glycine with tetrahydrofolate (THF) serving as the one-carbon carrier. This reaction serves as the major source of one-carbon groups required for the biosynthesis of purines, thymidylate, methionine, and other important biomolecules. Also exhibits THF-independent aldolase activity toward beta-hydroxyamino acids, producing glycine and aldehydes, via a retro-aldol mechanism. In Mesorhizobium japonicum (strain LMG 29417 / CECT 9101 / MAFF 303099) (Mesorhizobium loti (strain MAFF 303099)), this protein is Serine hydroxymethyltransferase 2.